Consider the following 370-residue polypeptide: 3-dehydroquinate synthase (370 aa).

NAD(+) contacts are provided by residues 70-75 (DAEDGK), 104-108 (GAATD), 128-129 (TT), lysine 141, lysine 150, and 168-171 (TLET). Zn(2+) contacts are provided by glutamate 183, histidine 246, and histidine 262.

Belongs to the sugar phosphate cyclases superfamily. Dehydroquinate synthase family. Requires Co(2+) as cofactor. Zn(2+) is required as a cofactor. It depends on NAD(+) as a cofactor.

The protein localises to the cytoplasm. The enzyme catalyses 7-phospho-2-dehydro-3-deoxy-D-arabino-heptonate = 3-dehydroquinate + phosphate. The protein operates within metabolic intermediate biosynthesis; chorismate biosynthesis; chorismate from D-erythrose 4-phosphate and phosphoenolpyruvate: step 2/7. Its function is as follows. Catalyzes the conversion of 3-deoxy-D-arabino-heptulosonate 7-phosphate (DAHP) to dehydroquinate (DHQ). This is 3-dehydroquinate synthase from Rhodococcus opacus (strain B4).